A 191-amino-acid polypeptide reads, in one-letter code: MPDGEVNKLRDVIDKKILDARRVFFSEPVTDKSAADAIKKLWYLELSHPGQPIVFVINSPGGSVDAGFAVWDQIKMMTSPVTTVVTGLAASMGSVLSLCAAPGRRFATPHSRIMIHQPSIGGPITGQATDLDIHAREILKTKKRIVDVYLEATGQPREVIEKAIDRDMWMTADEAKDFGLLDGILFSFDDL.

Ser-91 acts as the Nucleophile in catalysis. Residue His-116 is part of the active site.

The protein belongs to the peptidase S14 family. Fourteen ClpP subunits assemble into 2 heptameric rings which stack back to back to give a disk-like structure with a central cavity, resembling the structure of eukaryotic proteasomes.

It is found in the cytoplasm. The catalysed reaction is Hydrolysis of proteins to small peptides in the presence of ATP and magnesium. alpha-casein is the usual test substrate. In the absence of ATP, only oligopeptides shorter than five residues are hydrolyzed (such as succinyl-Leu-Tyr-|-NHMec, and Leu-Tyr-Leu-|-Tyr-Trp, in which cleavage of the -Tyr-|-Leu- and -Tyr-|-Trp bonds also occurs).. In terms of biological role, cleaves peptides in various proteins in a process that requires ATP hydrolysis. Has a chymotrypsin-like activity. Plays a major role in the degradation of misfolded proteins. The chain is ATP-dependent Clp protease proteolytic subunit 1 from Chlamydia caviae (strain ATCC VR-813 / DSM 19441 / 03DC25 / GPIC) (Chlamydophila caviae).